A 258-amino-acid chain; its full sequence is Lysine-rich coiled-coil protein 1 (258 aa).

The interval 142–258 (DNSTSTHQAS…MLWDQSILGF (117 aa)) is disordered. Over residues 150–161 (ASHKQIHQKRKR) the composition is skewed to basic residues. Composition is skewed to basic and acidic residues over residues 162 to 175 (HPEEGREKSEEEWS), 183 to 213 (CKEIDLDKHKSIQRKKTEVEIETVHVSTEKL), and 220 to 232 (KGRDVVSKKEERK). Residues 211-248 (EKLKNRKEKKGRDVVSKKEERKRTKKKKEQGQERTEEE) adopt a coiled-coil conformation.

The sequence is that of Lysine-rich coiled-coil protein 1 (KRCC1) from Pongo abelii (Sumatran orangutan).